The chain runs to 378 residues: MDLIGLLKSQFLCHLVFCYVFIASGLIVNAIQLCTLVIWPINKQLFRKINARLCYCVSSQLVMLLEWWSGTECTIYTDPKASPHYGKENAIVVLNHKFEIDFLCGWSLAERLGILGNSKVLAKKELAYVPIIGWMWYFVEMIFCTRKWEQDRQTVAKSLLHLRDYPEKYLFLIHCEGTRFTEKKHQISMQVAQAKGLPSLKHHLLPRTKGFAITVKCLRDVVPAVYDCTLNFRNNENPTLLGVLNGKKYHADCYVRRIPMEDIPEDEDKCSAWLHKLYQEKDAFQEEYYRTGVFPETPWVPPRRPWSLVNWLFWASLLLYPFFQFLVSMVSSGSSVTLASLVLIFCMASMGVRWMIGVTEIDKGSAYGNIDNKRKQTD.

A helical membrane pass occupies residues phenylalanine 11–isoleucine 31. Residues histidine 96–aspartate 101 carry the HXXXXD motif motif. 3 consecutive transmembrane segments (helical) span residues glutamate 125 to threonine 145, tryptophan 311 to serine 331, and leucine 338 to valine 358.

It belongs to the 1-acyl-sn-glycerol-3-phosphate acyltransferase family.

It localises to the endoplasmic reticulum membrane. The catalysed reaction is a 1-acyl-sn-glycero-3-phosphate + an acyl-CoA = a 1,2-diacyl-sn-glycero-3-phosphate + CoA. It carries out the reaction (4Z,7Z,10Z,13Z,16Z,19Z)-docosahexaenoyl-CoA + 1-hexadecanoyl-sn-glycero-3-phosphate = 1-hexadecanoyl-2-(4Z,7Z,10Z,13Z,16Z,19Z-docosahexaenoyl)-sn-glycero-3-phosphate + CoA. It catalyses the reaction 1-octadecanoyl-sn-glycero-3-phosphate + (9Z,12Z)-octadecadienoyl-CoA = 1-octadecanoyl-2-(9Z,12Z-octadecadienoyl)-sn-glycero-3-phosphate + CoA. The enzyme catalyses 1-octadecanoyl-sn-glycero-3-phosphate + (4Z,7Z,10Z,13Z,16Z,19Z)-docosahexaenoyl-CoA = 1-octadecanoyl-2-(4Z,7Z,10Z,13Z,16Z,19Z-docosahexaenoyl)-sn-glycero-3-phosphate + CoA. The catalysed reaction is (4Z,7Z,10Z,13Z,16Z,19Z)-docosahexaenoyl-CoA + 1-(9Z-octadecenoyl)-sn-glycero-3-phosphate = 1-(9Z-octadecenoyl)-2-(4Z,7Z,10Z,13Z,16Z,19Z-docosahexaenoyl)-sn-glycero-3-phosphate + CoA. The protein operates within phospholipid metabolism; CDP-diacylglycerol biosynthesis; CDP-diacylglycerol from sn-glycerol 3-phosphate: step 2/3. Its function is as follows. Converts 1-acyl-sn-glycerol-3-phosphate (lysophosphatidic acid or LPA) into 1,2-diacyl-sn-glycerol-3-phosphate (phosphatidic acid or PA) by incorporating an acyl moiety at the sn-2 position of the glycerol backbone. Exhibits high acyl-CoA specificity for polyunsaturated fatty acyl-CoA, especially docosahexaenoyl-CoA (22:6-CoA, DHA-CoA). The protein is 1-acyl-sn-glycerol-3-phosphate acyltransferase delta (Agpat4) of Rattus norvegicus (Rat).